A 121-amino-acid polypeptide reads, in one-letter code: RxLR effector protein PexRD2 (121 aa).

The signal sequence occupies residues 1–20 (MRLSYVIVVIATSFLVTTEA). Positions 38–56 (RLLRKHYTAAENDDDSEAR) match the RxLR-dEER motif. The tract at residues 57–121 (ALNTEKMKTM…LNYVAEHTAV (65 aa)) is WY domain.

Belongs to the RxLR effector family. Homodimer. Interacts with host MAPKKK epsilon (via its kinase domain).

The protein resides in the secreted. The protein localises to the host cytoplasm. Its subcellular location is the host nucleus. Functionally, effector that enhances P.infestans colonization of Nicotiana benthamiana leaves. Induces a weak Cell death response in N.benthamiana. PexRD2-induced cell death is dependent on SGT1, suggesting that PexRD2 is recognized by the plant immune system. Interacts with the kinase domain of the host MAPKKK epsilon, a positive regulator of cell death associated with plant immunity, and perturbs signaling pathways triggered by MAPKKK epsilon. This chain is RxLR effector protein PexRD2, found in Phytophthora infestans (strain T30-4) (Potato late blight agent).